Consider the following 384-residue polypeptide: Spermidine/putrescine import ATP-binding protein PotA (384 aa).

Positions 6 to 238 (IAFQNVSKVF…PINHFVATFI (233 aa)) constitute an ABC transporter domain. An ATP-binding site is contributed by 40 to 47 (GASGSGKS).

This sequence belongs to the ABC transporter superfamily. Spermidine/putrescine importer (TC 3.A.1.11.1) family. In terms of assembly, the complex is composed of two ATP-binding proteins (PotA), two transmembrane proteins (PotB and PotC) and a solute-binding protein (PotD).

Its subcellular location is the cell membrane. The enzyme catalyses ATP + H2O + polyamine-[polyamine-binding protein]Side 1 = ADP + phosphate + polyamineSide 2 + [polyamine-binding protein]Side 1.. Part of the ABC transporter complex PotABCD involved in spermidine/putrescine import. Responsible for energy coupling to the transport system. This is Spermidine/putrescine import ATP-binding protein PotA from Streptococcus thermophilus (strain ATCC BAA-491 / LMD-9).